Here is a 228-residue protein sequence, read N- to C-terminus: NAD(P)H-hydrate epimerase (228 aa).

Residues 9–209 (VRAVERLAHR…LLGLTPAFLA (201 aa)) form the YjeF N-terminal domain. 53-57 (NNGGD) contacts (6S)-NADPHX. N54 and D115 together coordinate K(+). Residues 119–125 (GIGLARP) and D148 each bind (6S)-NADPHX. S151 is a binding site for K(+).

The protein belongs to the NnrE/AIBP family. The cofactor is K(+).

The catalysed reaction is (6R)-NADHX = (6S)-NADHX. It carries out the reaction (6R)-NADPHX = (6S)-NADPHX. Functionally, catalyzes the epimerization of the S- and R-forms of NAD(P)HX, a damaged form of NAD(P)H that is a result of enzymatic or heat-dependent hydration. This is a prerequisite for the S-specific NAD(P)H-hydrate dehydratase to allow the repair of both epimers of NAD(P)HX. In Bordetella parapertussis (strain 12822 / ATCC BAA-587 / NCTC 13253), this protein is NAD(P)H-hydrate epimerase.